The following is a 515-amino-acid chain: 1-pyrroline-5-carboxylate dehydrogenase (515 aa).

Catalysis depends on residues Glu286 and Cys320.

Belongs to the aldehyde dehydrogenase family. RocA subfamily.

It carries out the reaction L-glutamate 5-semialdehyde + NAD(+) + H2O = L-glutamate + NADH + 2 H(+). It functions in the pathway amino-acid degradation; L-proline degradation into L-glutamate; L-glutamate from L-proline: step 2/2. The sequence is that of 1-pyrroline-5-carboxylate dehydrogenase from Bacillus cereus (strain ATCC 10987 / NRS 248).